The sequence spans 769 residues: Acetyl-coenzyme A carboxylase carboxyl transferase subunit alpha, chloroplastic (769 aa).

A chloroplast-targeting transit peptide spans 1-54; it reads MASISHSSLALGGASSASASDYLRSSSNGVNGVPLKTLGRAVFTTIRRKDLAVT. The CoA carboxyltransferase C-terminal domain maps to 132–385; the sequence is LENKYRQALK…KIAINENMNE (254 aa). 2 coiled-coil regions span residues 426–504 and 631–744; these read EAVF…ASSE and KQNQ…SDGS. Residues 718–769 are disordered; that stretch reads GLQEKQDELEKELAAARELAAEESDGSVKEDDDDDEDSSESGKSEMVNPSFA. Basic and acidic residues predominate over residues 721–732; sequence EKQDELEKELAA. The span at 738 to 756 shows a compositional bias: acidic residues; it reads AEESDGSVKEDDDDDEDSS. Phosphoserine is present on S741.

The protein belongs to the AccA family. Acetyl-CoA carboxylase is a heterohexamer composed of biotin carboxyl carrier protein, biotin carboxylase and two subunits each of ACCase subunit alpha and ACCase plastid-coded subunit beta (accD). As to expression, accumulates in fatty acids synthesizing tissues such as embryos, expanding leaves, flower buds, flowers, and developing siliques.

It localises to the plastid. Its subcellular location is the chloroplast inner membrane. It catalyses the reaction N(6)-carboxybiotinyl-L-lysyl-[protein] + acetyl-CoA = N(6)-biotinyl-L-lysyl-[protein] + malonyl-CoA. It functions in the pathway lipid metabolism; malonyl-CoA biosynthesis; malonyl-CoA from acetyl-CoA: step 1/1. Its function is as follows. Component of the acetyl coenzyme A carboxylase (ACC) complex. First, biotin carboxylase catalyzes the carboxylation of biotin on its carrier protein (BCCP) and then the CO(2) group is transferred by the carboxyltransferase to acetyl-CoA to form malonyl-CoA. The polypeptide is Acetyl-coenzyme A carboxylase carboxyl transferase subunit alpha, chloroplastic (CAC3) (Arabidopsis thaliana (Mouse-ear cress)).